A 296-amino-acid polypeptide reads, in one-letter code: uncharacterized protein (296 aa).

Residues 1 to 20 (MKKALGILAILLILVGGYFA) form the signal peptide.

This is an uncharacterized protein from Aquifex aeolicus (strain VF5).